We begin with the raw amino-acid sequence, 280 residues long: Purine nucleoside phosphorylase (280 aa).

Phosphate-binding positions include Ser-15 and 55-56; that span reads RH. Residue Met-194 coordinates substrate. Residue Thr-195 coordinates phosphate. 218–220 is a binding site for substrate; that stretch reads DLD.

Belongs to the PNP/MTAP phosphorylase family. MTAP subfamily. As to quaternary structure, homohexamer. Dimer of a homotrimer.

The enzyme catalyses a purine D-ribonucleoside + phosphate = a purine nucleobase + alpha-D-ribose 1-phosphate. Its pathway is purine metabolism; purine nucleoside salvage. Functionally, purine nucleoside phosphorylase involved in purine salvage. In Streptomyces coelicolor (strain ATCC BAA-471 / A3(2) / M145), this protein is Purine nucleoside phosphorylase.